We begin with the raw amino-acid sequence, 839 residues long: Lon protease (839 aa).

In terms of domain architecture, Lon N-terminal spans 31-224 (LFLIPIKSRP…KVLLFLKKEI (194 aa)). 377-384 (GPPGVGKT) lines the ATP pocket. In terms of domain architecture, Lon proteolytic spans 613-790 (ASVPGTALGL…EEVALLLFDE (178 aa)). Active-site residues include Ser-696 and Lys-739. The tract at residues 807–839 (IVNPTRKLSPKKKTTQKQKLSLSKQKGNNQKKK) is disordered. Low complexity predominate over residues 823-832 (KQKLSLSKQK).

Belongs to the peptidase S16 family. As to quaternary structure, homohexamer. Organized in a ring with a central cavity.

The protein localises to the cytoplasm. The enzyme catalyses Hydrolysis of proteins in presence of ATP.. Its function is as follows. ATP-dependent serine protease that mediates the selective degradation of mutant and abnormal proteins as well as certain short-lived regulatory proteins. Required for cellular homeostasis and for survival from DNA damage and developmental changes induced by stress. Degrades polypeptides processively to yield small peptide fragments that are 5 to 10 amino acids long. Binds to DNA in a double-stranded, site-specific manner. This chain is Lon protease, found in Leptospira interrogans serogroup Icterohaemorrhagiae serovar copenhageni (strain Fiocruz L1-130).